The chain runs to 223 residues: Homeobox protein egl-5 (223 aa).

A compositionally biased stretch (low complexity) spans 1 to 25 (MNTSTSAFDFGSSTASSAATSTTSS). Disordered stretches follow at residues 1–58 (MNTS…STEA) and 168–191 (KKEK…PPKG). The homeobox DNA-binding region spans 112–171 (SKKGRQTYQRYQTSVLEAKFQQSSYVSKKQREELRLQTQLTDRQIKIWFQNRRMKAKKEK).

Belongs to the Abd-B homeobox family. Interacts with the TCF transcription factor pop-1.

The protein localises to the nucleus. Involved in control of cell fate and pattern formation along the anterior-posterior axis, acting mainly in the tail. Required during embryonic and postembryonic development. Essential for the determination of specific neurons, including the PLM touch neurons. Plays a role in neural fate specification in the hermaphrodite-specific neuron (HSN)/PHB neuron lineage, acting in concert with T-box protein tbx-2 and the asymmetric cell division protein ham-1. Required for male gonadal fate determination, acting in parallel with a WNT/beta-catenin pathway, perhaps by recruiting pop-1 to male-specific gonadal target genes. Involved in development of the hermaphrodite hindgut, and for the response to rectal infection by the coryneform bacterium M.nematophilum. In Caenorhabditis elegans, this protein is Homeobox protein egl-5.